A 363-amino-acid chain; its full sequence is UDP-N-acetylglucosamine--N-acetylmuramyl-(pentapeptide) pyrophosphoryl-undecaprenol N-acetylglucosamine transferase (363 aa).

Residues 12 to 14, serine 196, and glutamine 291 each bind UDP-N-acetyl-alpha-D-glucosamine; that span reads TAG.

This sequence belongs to the glycosyltransferase 28 family. MurG subfamily.

The protein localises to the cell inner membrane. It catalyses the reaction di-trans,octa-cis-undecaprenyl diphospho-N-acetyl-alpha-D-muramoyl-L-alanyl-D-glutamyl-meso-2,6-diaminopimeloyl-D-alanyl-D-alanine + UDP-N-acetyl-alpha-D-glucosamine = di-trans,octa-cis-undecaprenyl diphospho-[N-acetyl-alpha-D-glucosaminyl-(1-&gt;4)]-N-acetyl-alpha-D-muramoyl-L-alanyl-D-glutamyl-meso-2,6-diaminopimeloyl-D-alanyl-D-alanine + UDP + H(+). It participates in cell wall biogenesis; peptidoglycan biosynthesis. Functionally, cell wall formation. Catalyzes the transfer of a GlcNAc subunit on undecaprenyl-pyrophosphoryl-MurNAc-pentapeptide (lipid intermediate I) to form undecaprenyl-pyrophosphoryl-MurNAc-(pentapeptide)GlcNAc (lipid intermediate II). This chain is UDP-N-acetylglucosamine--N-acetylmuramyl-(pentapeptide) pyrophosphoryl-undecaprenol N-acetylglucosamine transferase, found in Legionella pneumophila (strain Corby).